The sequence spans 447 residues: Protein cereblon (447 aa).

Acidic residues-rich tracts occupy residues Met-1 to Pro-10 and Glu-25 to Leu-34. Positions Met-1–Ile-47 are disordered. A Lon N-terminal domain is found at Ile-82–Thr-322. One can recognise a CULT domain in the interval Cys-321–Ile-429. Residues Cys-326 and Cys-329 each coordinate Zn(2+). The (S)-thalidomide site is built by Trp-383 and Trp-389. 2 residues coordinate Zn(2+): Cys-394 and Cys-397.

This sequence belongs to the CRBN family. As to quaternary structure, component of a DCX (DDB1-CUL4-X-box) protein ligase complex.

The protein resides in the cytoplasm. The protein localises to the nucleus. Its pathway is protein modification; protein ubiquitination. Substrate recognition component of a DCX (DDB1-CUL4-X-box) E3 protein ligase complex that mediates the ubiquitination and subsequent proteasomal degradation of target proteins, such as MEIS2. Normal degradation of key regulatory proteins is required for normal limb outgrowth and expression of the fibroblast growth factor FGF8. Maintains presynaptic glutamate release and consequently cognitive functions, such as memory and learning, by negatively regulating large-conductance calcium-activated potassium (BK) channels in excitatory neurons. Likely to function by regulating the assembly and neuronal surface expression of BK channels via its interaction with KCNT1. May also be involved in regulating anxiety-like behaviors via a BK channel-independent mechanism. This chain is Protein cereblon (crbn), found in Xenopus tropicalis (Western clawed frog).